The chain runs to 66 residues: Nigrocin-2GRa (66 aa).

An N-terminal signal peptide occupies residues M1–C22. The propeptide occupies Q23–R45. Cysteines 60 and 66 form a disulfide.

As to expression, expressed by the skin glands.

It is found in the secreted. Its function is as follows. Antimicrobial peptide active at least against the Gram-positive bacterium S.aureus but with otherwise unclear activity spectrum. Lacks hemolytic activity against rabbit or human erythrocytes. This is Nigrocin-2GRa from Odorrana grahami (Yunnanfu frog).